Here is a 152-residue protein sequence, read N- to C-terminus: MEIFKKKNRVIAYTDGACKGNPGIGGWGAILSYNGVDKEIYGSEKDTTNNRMELMAAIKTLQALKRKCDITIYTDSKYLQNGINEWLANWKANGWKTAAKKEVKNKDLWQELDSLTNKHNVTWGWVKGHSGNAGNEKADELANKAIAELIGK.

In terms of domain architecture, RNase H type-1 spans 6 to 147; it reads KKNRVIAYTD…ADELANKAIA (142 aa). Mg(2+) is bound by residues aspartate 15, glutamate 53, aspartate 75, and aspartate 139.

Belongs to the RNase H family. Monomer. The cofactor is Mg(2+).

The protein resides in the cytoplasm. The enzyme catalyses Endonucleolytic cleavage to 5'-phosphomonoester.. Endonuclease that specifically degrades the RNA of RNA-DNA hybrids. The chain is Ribonuclease H from Francisella tularensis subsp. tularensis (strain FSC 198).